A 697-amino-acid polypeptide reads, in one-letter code: MNKYKNKYNTDNKFNNSKYIKNNQVELSKQELEDEEILKINDDEFNEGLNKQALFQQDDYVYKFKKQQKEEKIGGDEKTQIDNEKPEDFNITLKSIDFKSINLPSFKKRFLQSSTIKDIDSFEFINSTTEFIIENKSDDDNYYDDDDDDEGDKNKEKEKEKEKEKEKEKEKEKEKEKEKEKEKEKEKNKEIENKTYPNNCKIPIANTGESECLPNTLKLFFKKTQFPTPTLFQQYAWPAILTGHDIIGTSLPGSGKTLGYLAPMIPHCLARVDRGGKNKITGEKAPKQYTGILVLVLVPTRELGLQVHSNTLIITQLFGIKTSVIYGGISKNLQIEQLEKEKPQILISTPGRLIEMIENGHVDLSSVTMLVLDEADKMLSKGLIPQLKQIRGQIRPDSQNILFSATFPDSLKEVSKDWIKDPSIRLRIGSSELPKLNHIQQDAQLIAHHKKPRALIKLLSEPQFKEKKKTIVFFNKIKELKRISIMLLKSNIKHDTIFGNIDQELREKLINKFSSSRSTLLLSTDIIGRGIHIDDIFNIINYDFPRSLEQYCHRVGRAGRSDKVVNPKAFSFLTNSDSYLVEPFVQFLKDQHQNISIPFLKLCNENFGTKFEFTLSKRKQKKLAQKDDVEKDDEAYLAKYEKLIKKDRKKDSDDECKKFKSFKRKNIDSDSDNDSDSNSDNGKETKSKDKNKKFKKY.

The tract at residues 137–190 (SDDDNYYDDDDDDEGDKNKEKEKEKEKEKEKEKEKEKEKEKEKEKEKEKEKNKE) is disordered. Positions 140–151 (DNYYDDDDDDEG) are enriched in acidic residues. The segment covering 152–190 (DKNKEKEKEKEKEKEKEKEKEKEKEKEKEKEKEKEKNKE) has biased composition (basic and acidic residues). The short motif at 189–234 (KEIENKTYPNNCKIPIANTGESECLPNTLKLFFKKTQFPTPTLFQQ) is the Q motif element. Residues 226-228 (FPT), Gln233, and 250-257 (SLPGSGKT) each bind ATP. The region spanning 237-425 (WPAILTGHDI…KDWIKDPSIR (189 aa)) is the Helicase ATP-binding domain. Residues 373-376 (DEAD) carry the DEAD box motif. The Helicase C-terminal domain occupies 450 to 603 (KKPRALIKLL…NISIPFLKLC (154 aa)). A disordered region spans residues 665–697 (KNIDSDSDNDSDSNSDNGKETKSKDKNKKFKKY).

This sequence belongs to the DEAD box helicase family. DDX5/DBP2 subfamily.

The protein localises to the cytoplasm. It is found in the nucleus. It carries out the reaction ATP + H2O = ADP + phosphate + H(+). Its function is as follows. Probable ATP-dependent RNA helicase. The protein is Probable ATP-dependent RNA helicase ddx5 (ddx5) of Dictyostelium discoideum (Social amoeba).